A 27-amino-acid chain; its full sequence is uncharacterized protein (27 aa).

This is an uncharacterized protein from Saccharomyces cerevisiae (strain ATCC 204508 / S288c) (Baker's yeast).